Reading from the N-terminus, the 99-residue chain is Large ribosomal subunit protein uL23 (99 aa).

This sequence belongs to the universal ribosomal protein uL23 family. As to quaternary structure, part of the 50S ribosomal subunit. Contacts protein L29, and trigger factor when it is bound to the ribosome.

Its function is as follows. One of the early assembly proteins it binds 23S rRNA. One of the proteins that surrounds the polypeptide exit tunnel on the outside of the ribosome. Forms the main docking site for trigger factor binding to the ribosome. This chain is Large ribosomal subunit protein uL23, found in Agathobacter rectalis (strain ATCC 33656 / DSM 3377 / JCM 17463 / KCTC 5835 / VPI 0990) (Eubacterium rectale).